The following is a 261-amino-acid chain: Indole-3-glycerol phosphate synthase (261 aa).

This sequence belongs to the TrpC family.

The catalysed reaction is 1-(2-carboxyphenylamino)-1-deoxy-D-ribulose 5-phosphate + H(+) = (1S,2R)-1-C-(indol-3-yl)glycerol 3-phosphate + CO2 + H2O. The protein operates within amino-acid biosynthesis; L-tryptophan biosynthesis; L-tryptophan from chorismate: step 4/5. In Burkholderia mallei (strain NCTC 10247), this protein is Indole-3-glycerol phosphate synthase.